Consider the following 615-residue polypeptide: Dihydroxy-acid dehydratase (615 aa).

Mg(2+) is bound at residue Asp-81. Cys-122 is a [2Fe-2S] cluster binding site. Residues Asp-123 and Lys-124 each coordinate Mg(2+). Lys-124 is modified (N6-carboxylysine). [2Fe-2S] cluster is bound at residue Cys-195. Residue Glu-491 participates in Mg(2+) binding. Ser-517 (proton acceptor) is an active-site residue.

This sequence belongs to the IlvD/Edd family. As to quaternary structure, homodimer. Requires [2Fe-2S] cluster as cofactor. Mg(2+) serves as cofactor.

It catalyses the reaction (2R)-2,3-dihydroxy-3-methylbutanoate = 3-methyl-2-oxobutanoate + H2O. It carries out the reaction (2R,3R)-2,3-dihydroxy-3-methylpentanoate = (S)-3-methyl-2-oxopentanoate + H2O. Its pathway is amino-acid biosynthesis; L-isoleucine biosynthesis; L-isoleucine from 2-oxobutanoate: step 3/4. It participates in amino-acid biosynthesis; L-valine biosynthesis; L-valine from pyruvate: step 3/4. In terms of biological role, functions in the biosynthesis of branched-chain amino acids. Catalyzes the dehydration of (2R,3R)-2,3-dihydroxy-3-methylpentanoate (2,3-dihydroxy-3-methylvalerate) into 2-oxo-3-methylpentanoate (2-oxo-3-methylvalerate) and of (2R)-2,3-dihydroxy-3-methylbutanoate (2,3-dihydroxyisovalerate) into 2-oxo-3-methylbutanoate (2-oxoisovalerate), the penultimate precursor to L-isoleucine and L-valine, respectively. In Shewanella halifaxensis (strain HAW-EB4), this protein is Dihydroxy-acid dehydratase.